The chain runs to 178 residues: Gamma-crystallin M1 (178 aa).

2 Beta/gamma crystallin 'Greek key' domains span residues 2-40 and 41-86; these read GKII…RVES and GCFM…RMIP. The tract at residues 87–91 is connecting peptide; the sequence is PYRGS. 2 Beta/gamma crystallin 'Greek key' domains span residues 92–132 and 133–175; these read YRMR…HVMD and GHWL…RRIT.

This sequence belongs to the beta/gamma-crystallin family. In terms of assembly, monomer.

Crystallins are the dominant structural components of the vertebrate eye lens. In Cyprinus carpio (Common carp), this protein is Gamma-crystallin M1.